The primary structure comprises 152 residues: Transcriptional regulator MraZ (152 aa).

SpoVT-AbrB domains lie at A5 to E52 and A81 to V124.

The protein belongs to the MraZ family. In terms of assembly, forms oligomers.

It is found in the cytoplasm. The protein resides in the nucleoid. This is Transcriptional regulator MraZ from Pseudoalteromonas atlantica (strain T6c / ATCC BAA-1087).